The sequence spans 275 residues: MASRGVVGIFLLSALPLLCLELRRGKPDLGIKDLILLCGRIFLLLALLTLIISVTTSWVNSFKPSQVYLKEEEEKNEKRQKLVRKKQQEAQGEKVSRYIENVLKPSQEMKLKKLEERFYQMTGETWKLSNGHKLGGDEDLELDSESQTSFETSNREAAKRRNLPNSVTNISPPAEQPTKKEVLDLPEEPPETAEEVVTVALRCPSGRVLRRRFFKSCSSQVLFDWMMKLGYRTSLYSLSTSFPRRPLEVEAGWSLQDIGITVDTVLNVEEKEQSS.

A topological domain (cytoplasmic) is located at residue Met-1. The chain crosses the membrane as a helical span at residues 2-22 (ASRGVVGIFLLSALPLLCLEL). The Lumenal segment spans residues 23-33 (RRGKPDLGIKD). Residues 34 to 54 (LILLCGRIFLLLALLTLIISV) traverse the membrane as a helical segment. Residues 55 to 275 (TTSWVNSFKP…LNVEEKEQSS (221 aa)) lie on the Cytoplasmic side of the membrane. The interval 137 to 181 (DEDLELDSESQTSFETSNREAAKRRNLPNSVTNISPPAEQPTKKE) is disordered. Positions 192 to 268 (TAEEVVTVAL…GITVDTVLNV (77 aa)) constitute a UBX domain.

In terms of assembly, interacts with SYVN1 and VCP.

The protein localises to the endoplasmic reticulum membrane. Its function is as follows. Involved in endoplasmic reticulum-associated degradation (ERAD) for misfolded lumenal proteins, possibly by tethering VCP to the endoplasmic reticulum membrane. May play a role in reproduction. May play a role in reproduction. This Bos taurus (Bovine) protein is UBX domain-containing protein 8 (UBXN8).